The sequence spans 121 residues: Dihydroneopterin aldolase (121 aa).

Substrate is bound by residues E25 and M114.

Belongs to the archaeal dihydroneopterin aldolase family. Homotetramer.

It carries out the reaction 7,8-dihydroneopterin = 6-hydroxymethyl-7,8-dihydropterin + glycolaldehyde. It participates in cofactor biosynthesis; 5,6,7,8-tetrahydromethanopterin biosynthesis. Functionally, catalyzes the conversion of 7,8-dihydroneopterin (H2Neo) to 6-hydroxymethyl-7,8-dihydropterin (6-HMD). This is Dihydroneopterin aldolase from Methanocaldococcus jannaschii (strain ATCC 43067 / DSM 2661 / JAL-1 / JCM 10045 / NBRC 100440) (Methanococcus jannaschii).